A 98-amino-acid polypeptide reads, in one-letter code: NADH-ubiquinone oxidoreductase chain 4L (98 aa).

A run of 3 helical transmembrane segments spans residues 2–22 (PSIS…MLIF), 29–49 (SLLC…LTIL), and 61–81 (ILLL…LVTV).

It belongs to the complex I subunit 4L family. Core subunit of respiratory chain NADH dehydrogenase (Complex I) which is composed of 45 different subunits.

Its subcellular location is the mitochondrion inner membrane. The enzyme catalyses a ubiquinone + NADH + 5 H(+)(in) = a ubiquinol + NAD(+) + 4 H(+)(out). Its function is as follows. Core subunit of the mitochondrial membrane respiratory chain NADH dehydrogenase (Complex I) which catalyzes electron transfer from NADH through the respiratory chain, using ubiquinone as an electron acceptor. Part of the enzyme membrane arm which is embedded in the lipid bilayer and involved in proton translocation. This is NADH-ubiquinone oxidoreductase chain 4L (MT-ND4L) from Eulemur coronatus (Crowned lemur).